The following is a 244-amino-acid chain: Tyrosine recombinase XerD-like (244 aa).

A Core-binding (CB) domain is found at methionine 1–tyrosine 73. The Tyr recombinase domain maps to alanine 90–arginine 244. Residues lysine 150 and arginine 211 contribute to the active site. Tyrosine 243 functions as the O-(3'-phospho-DNA)-tyrosine intermediate in the catalytic mechanism.

This sequence belongs to the 'phage' integrase family. XerD-like subfamily.

Its subcellular location is the cytoplasm. Functionally, putative tyrosine recombinase. Not involved in the cutting and rejoining of the recombining DNA molecules on dif(SL) site. In Streptococcus pneumoniae (strain CGSP14), this protein is Tyrosine recombinase XerD-like.